Reading from the N-terminus, the 124-residue chain is Protein TAR1 (124 aa).

The tract at residues 80–124 is disordered; the sequence is KNRTPRHTGFSPSMTSCSKEHRQGTAPKLPSPNYNSGTEGTRFQI. Positions 111 to 124 are enriched in polar residues; it reads PNYNSGTEGTRFQI.

The protein localises to the mitochondrion. In terms of biological role, may be involved in mtDNA stability or mitochondrial gene expression regulation at the post-transcriptional level. In Saccharomyces cerevisiae (strain ATCC 204508 / S288c) (Baker's yeast), this protein is Protein TAR1 (TAR1).